The primary structure comprises 123 residues: Small ribosomal subunit protein uS13 (123 aa).

Positions 95 to 123 (GLPVRGQRTKTNARTRKGPARTVAGKKKK) are disordered.

The protein belongs to the universal ribosomal protein uS13 family. In terms of assembly, part of the 30S ribosomal subunit. Forms a loose heterodimer with protein S19. Forms two bridges to the 50S subunit in the 70S ribosome.

Its function is as follows. Located at the top of the head of the 30S subunit, it contacts several helices of the 16S rRNA. In the 70S ribosome it contacts the 23S rRNA (bridge B1a) and protein L5 of the 50S subunit (bridge B1b), connecting the 2 subunits; these bridges are implicated in subunit movement. Contacts the tRNAs in the A and P-sites. In Heliobacterium modesticaldum (strain ATCC 51547 / Ice1), this protein is Small ribosomal subunit protein uS13.